The chain runs to 188 residues: Gag polyprotein (188 aa).

The segment covering 77-90 (VGETTVQRDAKMAP) has biased composition (basic and acidic residues). The tract at residues 77-99 (VGETTVQRDAKMAPEETATPKTV) is disordered. The PPXY motif motif lies at 121 to 124 (PPPY). Positions 130 to 166 (YPSLAGVGEQQGQGGDTPRGAEQPRAEPGHAGLAPGP) are disordered.

In terms of processing, specific enzymatic cleavages in vivo yield mature proteins.

It localises to the virion. This is Gag polyprotein (ev-2) from Galliformes (EV-2).